The chain runs to 274 residues: Kit ligand (274 aa).

A signal peptide spans 1–25; it reads MKKTQTWIITCIYLQLLLFNPLVHS. Q26 carries the pyrrolidone carboxylic acid modification. Residues 26 to 215 are Extracellular-facing; sequence QGICRNRVTD…SNSIEDSSLQ (190 aa). 2 disulfides stabilise this stretch: C29–C114 and C68–C164. 4 N-linked (GlcNAc...) asparagine glycosylation sites follow: N90, N97, N145, and N196. The chain crosses the membrane as a helical span at residues 216 to 238; sequence WAAVALPAFFSLVIGFAFGALYW. At 239–274 the chain is on the cytoplasmic side; sequence KKKQPNLTRTVENRQINEEDNEISMLQEKEREFQEV.

This sequence belongs to the SCF family. As to quaternary structure, homodimer, non-covalently linked. In terms of processing, a soluble form is produced by proteolytic processing of the extracellular domain.

Its subcellular location is the cytoplasm. It is found in the cytoskeleton. The protein resides in the cell membrane. It localises to the cell projection. The protein localises to the lamellipodium. Its subcellular location is the filopodium. It is found in the secreted. Stimulates the proliferation of mast cells. Able to augment the proliferation of both myeloid and lymphoid hematopoietic progenitors in bone marrow culture. Also mediates cell-cell adhesion. Acts synergistically with other cytokines, probably interleukins. The sequence is that of Kit ligand (KITLG) from Capra hircus (Goat).